A 208-amino-acid chain; its full sequence is Probable nicotinate-nucleotide adenylyltransferase (208 aa).

Belongs to the NadD family.

The catalysed reaction is nicotinate beta-D-ribonucleotide + ATP + H(+) = deamido-NAD(+) + diphosphate. Its pathway is cofactor biosynthesis; NAD(+) biosynthesis; deamido-NAD(+) from nicotinate D-ribonucleotide: step 1/1. Catalyzes the reversible adenylation of nicotinate mononucleotide (NaMN) to nicotinic acid adenine dinucleotide (NaAD). This Kineococcus radiotolerans (strain ATCC BAA-149 / DSM 14245 / SRS30216) protein is Probable nicotinate-nucleotide adenylyltransferase.